A 639-amino-acid polypeptide reads, in one-letter code: tRNA 5-methylaminomethyl-2-thiouridine biosynthesis bifunctional protein MnmC (639 aa).

Residues 1–228 are tRNA (mnm(5)s(2)U34)-methyltransferase; that stretch reads MSEPIEWLED…KRDNLQATYA (228 aa). An FAD-dependent cmnm(5)s(2)U34 oxidoreductase region spans residues 254–639; that stretch reads VGAGLAGAAV…SERWLGYEPQ (386 aa).

In the N-terminal section; belongs to the methyltransferase superfamily. tRNA (mnm(5)s(2)U34)-methyltransferase family. The protein in the C-terminal section; belongs to the DAO family. Requires FAD as cofactor.

Its subcellular location is the cytoplasm. The enzyme catalyses 5-aminomethyl-2-thiouridine(34) in tRNA + S-adenosyl-L-methionine = 5-methylaminomethyl-2-thiouridine(34) in tRNA + S-adenosyl-L-homocysteine + H(+). Functionally, catalyzes the last two steps in the biosynthesis of 5-methylaminomethyl-2-thiouridine (mnm(5)s(2)U) at the wobble position (U34) in tRNA. Catalyzes the FAD-dependent demodification of cmnm(5)s(2)U34 to nm(5)s(2)U34, followed by the transfer of a methyl group from S-adenosyl-L-methionine to nm(5)s(2)U34, to form mnm(5)s(2)U34. This chain is tRNA 5-methylaminomethyl-2-thiouridine biosynthesis bifunctional protein MnmC, found in Acidovorax sp. (strain JS42).